We begin with the raw amino-acid sequence, 131 residues long: Large ribosomal subunit protein eL32 (131 aa).

It belongs to the eukaryotic ribosomal protein eL32 family. Component of the large ribosomal subunit (LSU). Mature N.crassa ribosomes consist of a small (40S) and a large (60S) subunit. The 40S small subunit contains 1 molecule of ribosomal RNA (18S rRNA) and at least 32 different proteins. The large 60S subunit contains 3 rRNA molecules (26S, 5.8S and 5S rRNA) and at least 42 different proteins.

The protein localises to the cytoplasm. Functionally, component of the ribosome, a large ribonucleoprotein complex responsible for the synthesis of proteins in the cell. The small ribosomal subunit (SSU) binds messenger RNAs (mRNAs) and translates the encoded message by selecting cognate aminoacyl-transfer RNA (tRNA) molecules. The large subunit (LSU) contains the ribosomal catalytic site termed the peptidyl transferase center (PTC), which catalyzes the formation of peptide bonds, thereby polymerizing the amino acids delivered by tRNAs into a polypeptide chain. The nascent polypeptides leave the ribosome through a tunnel in the LSU and interact with protein factors that function in enzymatic processing, targeting, and the membrane insertion of nascent chains at the exit of the ribosomal tunnel. This chain is Large ribosomal subunit protein eL32 (crp-63), found in Neurospora crassa (strain ATCC 24698 / 74-OR23-1A / CBS 708.71 / DSM 1257 / FGSC 987).